Here is a 197-residue protein sequence, read N- to C-terminus: Small ribosomal subunit protein uS5 (197 aa).

Residues 1 to 27 (MAEREQRGGRDQRGGGRERKEREERDS) are disordered. The S5 DRBM domain maps to 29–92 (FVDKLVHINR…ESAKRNLTRV (64 aa)).

The protein belongs to the universal ribosomal protein uS5 family. In terms of assembly, part of the 30S ribosomal subunit. Contacts proteins S4 and S8.

Its function is as follows. With S4 and S12 plays an important role in translational accuracy. Functionally, located at the back of the 30S subunit body where it stabilizes the conformation of the head with respect to the body. This is Small ribosomal subunit protein uS5 from Bradyrhizobium diazoefficiens (strain JCM 10833 / BCRC 13528 / IAM 13628 / NBRC 14792 / USDA 110).